Consider the following 287-residue polypeptide: Ribonuclease Z (287 aa).

Residues H64, H66, D68, H69, H124, D191, and H250 each coordinate Zn(2+). The Proton acceptor role is filled by D68.

This sequence belongs to the RNase Z family. As to quaternary structure, homodimer. Zn(2+) serves as cofactor.

The enzyme catalyses Endonucleolytic cleavage of RNA, removing extra 3' nucleotides from tRNA precursor, generating 3' termini of tRNAs. A 3'-hydroxy group is left at the tRNA terminus and a 5'-phosphoryl group is left at the trailer molecule.. Zinc phosphodiesterase, which displays some tRNA 3'-processing endonuclease activity. Probably involved in tRNA maturation, by removing a 3'-trailer from precursor tRNA. The sequence is that of Ribonuclease Z from Pyrobaculum calidifontis (strain DSM 21063 / JCM 11548 / VA1).